Reading from the N-terminus, the 142-residue chain is Maximins y/Hw (142 aa).

The N-terminal stretch at 1 to 18 is a signal peptide; it reads MIFKYIVAVSFLIASGYA. Positions 19-43 are excised as a propeptide; sequence RSVKNDEQSLSQREVLEEESLREIR. Phe68 is subject to Phenylalanine amide. The propeptide occupies 72–121; sequence TAEDHEVMKRLEAVIRDLDSLDHSEEASERETRGFNQEEIANLFTKKEKR. Ile141 bears the Isoleucine amide mark.

It belongs to the bombinin family. Expressed by the skin glands.

It is found in the secreted. In terms of biological role, maximin-y shows antimicrobial activity against bacteria and against the fungus C.albicans. It has little hemolytic activity. Its function is as follows. Maximin-Hw shows antimicrobial activity against bacteria and against the fungus C.albicans. Shows strong hemolytic activity. This is Maximins y/Hw from Bombina maxima (Giant fire-bellied toad).